The following is a 134-amino-acid chain: MKVVHTVGKRRTAIARATAKEGSGKIRINKKPLELMEPKYIKMKLMEPVILAGEALSDIDVDIDVKGGGIVSQMDATRTALGKAIVEFTGKMELKEKFLSYDRTLLVSDARRTEPHKPSKSSKGPRAKRQKSYR.

A disordered region spans residues 109 to 134; that stretch reads DARRTEPHKPSKSSKGPRAKRQKSYR. Over residues 118 to 134 the composition is skewed to basic residues; the sequence is PSKSSKGPRAKRQKSYR.

Belongs to the universal ribosomal protein uS9 family.

This Methanococcus maripaludis (strain C5 / ATCC BAA-1333) protein is Small ribosomal subunit protein uS9.